A 290-amino-acid polypeptide reads, in one-letter code: ATP synthase gamma chain (290 aa).

It belongs to the ATPase gamma chain family. In terms of assembly, F-type ATPases have 2 components, CF(1) - the catalytic core - and CF(0) - the membrane proton channel. CF(1) has five subunits: alpha(3), beta(3), gamma(1), delta(1), epsilon(1). CF(0) has three main subunits: a, b and c.

The protein resides in the cell inner membrane. Its function is as follows. Produces ATP from ADP in the presence of a proton gradient across the membrane. The gamma chain is believed to be important in regulating ATPase activity and the flow of protons through the CF(0) complex. This chain is ATP synthase gamma chain, found in Delftia acidovorans (strain DSM 14801 / SPH-1).